Here is a 202-residue protein sequence, read N- to C-terminus: Imidazoleglycerol-phosphate dehydratase (202 aa).

It belongs to the imidazoleglycerol-phosphate dehydratase family.

Its subcellular location is the cytoplasm. It catalyses the reaction D-erythro-1-(imidazol-4-yl)glycerol 3-phosphate = 3-(imidazol-4-yl)-2-oxopropyl phosphate + H2O. The protein operates within amino-acid biosynthesis; L-histidine biosynthesis; L-histidine from 5-phospho-alpha-D-ribose 1-diphosphate: step 6/9. This is Imidazoleglycerol-phosphate dehydratase from Synechococcus sp. (strain WH7803).